Reading from the N-terminus, the 375-residue chain is ATP phosphoribosyltransferase regulatory subunit (375 aa).

The protein belongs to the class-II aminoacyl-tRNA synthetase family. HisZ subfamily. As to quaternary structure, heteromultimer composed of HisG and HisZ subunits.

It is found in the cytoplasm. It functions in the pathway amino-acid biosynthesis; L-histidine biosynthesis; L-histidine from 5-phospho-alpha-D-ribose 1-diphosphate: step 1/9. In terms of biological role, required for the first step of histidine biosynthesis. May allow the feedback regulation of ATP phosphoribosyltransferase activity by histidine. The polypeptide is ATP phosphoribosyltransferase regulatory subunit (Agrobacterium fabrum (strain C58 / ATCC 33970) (Agrobacterium tumefaciens (strain C58))).